The chain runs to 362 residues: N5-carboxyaminoimidazole ribonucleotide synthase (362 aa).

Residues Arg-85, Lys-125, 130 to 136 (GYDGRGQ), 158 to 161 (EKFI), Glu-166, and 244 to 245 (NE) contribute to the ATP site. The ATP-grasp domain maps to 89–274 (KSLLDELNLS…QFELHLRALL (186 aa)).

It belongs to the PurK/PurT family. As to quaternary structure, homodimer.

It catalyses the reaction 5-amino-1-(5-phospho-beta-D-ribosyl)imidazole + hydrogencarbonate + ATP = 5-carboxyamino-1-(5-phospho-D-ribosyl)imidazole + ADP + phosphate + 2 H(+). It participates in purine metabolism; IMP biosynthesis via de novo pathway; 5-amino-1-(5-phospho-D-ribosyl)imidazole-4-carboxylate from 5-amino-1-(5-phospho-D-ribosyl)imidazole (N5-CAIR route): step 1/2. Catalyzes the ATP-dependent conversion of 5-aminoimidazole ribonucleotide (AIR) and HCO(3)(-) to N5-carboxyaminoimidazole ribonucleotide (N5-CAIR). This is N5-carboxyaminoimidazole ribonucleotide synthase from Haemophilus influenzae (strain ATCC 51907 / DSM 11121 / KW20 / Rd).